A 280-amino-acid chain; its full sequence is Probable inactive shikimate kinase like 1, chloroplastic (280 aa).

The transit peptide at 1-54 directs the protein to the chloroplast; the sequence is MEIFSASASLTLTGFVPRLLPLLSPQARTTLCKPLLSSSSTRLISCHSRIAPSR.

Belongs to the shikimate kinase family.

The protein resides in the plastid. The protein localises to the chloroplast. In terms of biological role, required for chloroplast biogenesis. The polypeptide is Probable inactive shikimate kinase like 1, chloroplastic (SKL1) (Arabidopsis thaliana (Mouse-ear cress)).